A 515-amino-acid chain; its full sequence is Cytoplasmic dynein 1 light intermediate chain 1 (515 aa).

A compositionally biased stretch (low complexity) spans 1–24 (MAAVGRAGSFGSSSASGAANNASA). A disordered region spans residues 1 to 34 (MAAVGRAGSFGSSSASGAANNASAELRAGGEEDD). 64 to 71 (GEDGAGKT) contributes to the ATP binding site. 2 disordered regions span residues 370 to 424 (QSQL…DPNM) and 445 to 515 (KTGS…GEAS). Polar residues predominate over residues 397 to 409 (RTPNRSVTSNVAS). Positions 448–468 (SPGGPGGVGGSPGGGSAGGTG) are enriched in gly residues. Residues 490 to 499 (ELDRISRKPE) show a composition bias toward basic and acidic residues. The span at 502-515 (SPTSPTSPTEGEAS) shows a compositional bias: polar residues.

Belongs to the dynein light intermediate chain family. Homodimer. The cytoplasmic dynein 1 complex consists of two catalytic heavy chains (HCs) and a number of non-catalytic subunits presented by intermediate chains (ICs). Phosphorylated.

Its subcellular location is the cytoplasm. It is found in the cytoskeleton. It localises to the chromosome. The protein localises to the centromere. The protein resides in the kinetochore. Its subcellular location is the spindle pole. It is found in the recycling endosome membrane. In terms of biological role, acts as one of several non-catalytic accessory components of the cytoplasmic dynein 1 complex that are thought to be involved in linking dynein to cargos and to adapter proteins that regulate dynein function. Cytoplasmic dynein 1 acts as a motor for the intracellular retrograde motility of vesicles and organelles along microtubules. May play a role in binding dynein to membranous organelles or chromosomes. May regulate the movement of peripheral sorting endosomes along microtubule tracks toward the microtubule organizing center/centrosome, generating the endosomal recycling compartment. The polypeptide is Cytoplasmic dynein 1 light intermediate chain 1 (DYNC1LI1) (Gallus gallus (Chicken)).